A 366-amino-acid chain; its full sequence is Ferrochelatase (366 aa).

Residues histidine 210 and glutamate 293 each contribute to the Fe cation site.

This sequence belongs to the ferrochelatase family.

It localises to the cytoplasm. The catalysed reaction is heme b + 2 H(+) = protoporphyrin IX + Fe(2+). It participates in porphyrin-containing compound metabolism; protoheme biosynthesis; protoheme from protoporphyrin-IX: step 1/1. In terms of biological role, catalyzes the ferrous insertion into protoporphyrin IX. The chain is Ferrochelatase from Leptospira borgpetersenii serovar Hardjo-bovis (strain L550).